The sequence spans 539 residues: Tripartite motif-containing protein 26 (539 aa).

The RING-type zinc-finger motif lies at 16-57 (CSICLDYLRDPVTIDCGHVFCRSCTTDVRPISGSRPVCPLCK). A B box-type zinc finger spans residues 97–138 (QDAKLCERHREKLHYYCEDDGKLLCVMCRESREHRPHTAVLM). Zn(2+) is bound by residues Cys102, His105, Cys124, and His130. Positions 188-227 (IVAEFEQGHQFLREREEHLLEQLAKLEQELTEGREKFKSR) form a coiled coil. The region spanning 295 to 539 (RGLREFQGKL…WPGTRLLLRP (245 aa)) is the B30.2/SPRY domain. Residues 376–437 (REGWSEDEEE…EEEEEVLESC (62 aa)) are disordered. The segment covering 380-434 (SEDEEEGDEEEEGEEEEEEEEAGYGDGYDDWETDEDEESLGDEEEEEEEEEEEVL) has biased composition (acidic residues).

The protein belongs to the TRIM/RBCC family. As to quaternary structure, interacts with TBK1; this interaction bridges together TBK1 and NEMO in order to activate TBK1. Interacts with INCA1. In terms of processing, autoubiquitinates upon viral infection. In turn, autoubiquitinated TRIM26 recruits NEMO and bridges TBK1-NEMO interaction.

The protein resides in the cytoplasm. It is found in the nucleus. It carries out the reaction S-ubiquitinyl-[E2 ubiquitin-conjugating enzyme]-L-cysteine + [acceptor protein]-L-lysine = [E2 ubiquitin-conjugating enzyme]-L-cysteine + N(6)-ubiquitinyl-[acceptor protein]-L-lysine.. Functionally, E3 ubiquitin-protein ligase which regulates the IFN-beta production and antiviral response downstream of various DNA-encoded pattern-recognition receptors (PRRs). Also plays a central role in determining the response to different forms of oxidative stress by controlling levels of DNA glycosylases NEIL1, NEIL3 and NTH1 that are involved in repair of damaged DNA. Promotes nuclear IRF3 ubiquitination and proteasomal degradation. Bridges together TBK1 and NEMO during the innate response to viral infection leading to the activation of TBK1. Positively regulates LPS-mediated inflammatory innate immune response by catalyzing the 'Lys-11'-linked polyubiquitination of TAB1 to enhance its activation and subsequent NF-kappa-B and MAPK signaling. In a manner independent of its catalytic activity, inhibits WWP2, a SOX2-directed E3 ubiquitin ligase, and thus protects SOX2 from polyubiquitination and proteasomal degradation. Ubiquitinates the histone acetyltransferase protein complex component PHF20 and thereby triggers its degradation in the nucleus after its recruitment by the histone demethylase KDM6B, serving as a scaffold protein. Upon induction by TGF-beta, ubiquitinates the TFIID component TAF7 for proteasomal degradation. Induces ferroptosis by ubiquitinating SLC7A11, a critical protein for lipid reactive oxygen species (ROS) scavenging. The chain is Tripartite motif-containing protein 26 (TRIM26) from Pan troglodytes (Chimpanzee).